The following is a 625-amino-acid chain: Chaperone protein HtpG (625 aa).

The a; substrate-binding stretch occupies residues 1–337; sequence MSTNQETRGF…TNDLPLNVSR (337 aa). The interval 338–554 is b; sequence EILQENKITA…NDEMTTQMAK (217 aa). The c stretch occupies residues 555–625; it reads LFAAMGQKAP…FIKRMNKLLG (71 aa).

The protein belongs to the heat shock protein 90 family. As to quaternary structure, homodimer.

The protein resides in the cytoplasm. Functionally, molecular chaperone. Has ATPase activity. The polypeptide is Chaperone protein HtpG (Actinobacillus pleuropneumoniae serotype 5b (strain L20)).